The following is a 92-amino-acid chain: Small ribosomal subunit protein uS19 (92 aa).

The protein belongs to the universal ribosomal protein uS19 family.

In terms of biological role, protein S19 forms a complex with S13 that binds strongly to the 16S ribosomal RNA. The chain is Small ribosomal subunit protein uS19 from Borrelia recurrentis (strain A1).